Reading from the N-terminus, the 211-residue chain is Shikimate kinase (211 aa).

The segment at 1–22 (MHFRYNYRMQRSKTPNTKNSDT) is disordered. Residues 12-22 (SKTPNTKNSDT) show a composition bias toward polar residues. Residue 36-41 (GSGKTT) coordinates ATP. Thr-40 contacts Mg(2+). Substrate-binding residues include Asp-58, Arg-82, and Gly-104. Position 142 (Arg-142) interacts with ATP. Arg-161 serves as a coordination point for substrate. An ATP-binding site is contributed by Gln-178.

This sequence belongs to the shikimate kinase family. Monomer. The cofactor is Mg(2+).

It localises to the cytoplasm. It catalyses the reaction shikimate + ATP = 3-phosphoshikimate + ADP + H(+). The protein operates within metabolic intermediate biosynthesis; chorismate biosynthesis; chorismate from D-erythrose 4-phosphate and phosphoenolpyruvate: step 5/7. Catalyzes the specific phosphorylation of the 3-hydroxyl group of shikimic acid using ATP as a cosubstrate. The sequence is that of Shikimate kinase from Nitrosomonas europaea (strain ATCC 19718 / CIP 103999 / KCTC 2705 / NBRC 14298).